The chain runs to 456 residues: Putative sodium-coupled neutral amino acid transporter 11 (456 aa).

The interval 1 to 25 (MRAGPRRQHLLPPQDNRAAVGYQRQ) is disordered. Residues 58–78 (FNVVNSIIGSGIIDFSLILLI) traverse the membrane as a helical segment. N94 carries N-linked (GlcNAc...) asparagine glycosylation. 6 helical membrane passes run 98–118 (GFPG…IAMI), 143–163 (VFIG…LPLS), 171–191 (LGKV…IVMA), 206–226 (AWVF…FAFI), 252–272 (MSIV…YLTF), and 291–313 (VTFG…CFVT). An N-linked (GlcNAc...) asparagine glycan is attached at N325. 3 consecutive transmembrane segments (helical) span residues 329 to 349 (VFHI…SLLI), 351 to 371 (CLGI…IFII), and 390 to 410 (IMSY…FVMA).

It belongs to the amino acid/polyamine transporter 2 family.

It localises to the membrane. Its function is as follows. Putative sodium-dependent amino acid/proton antiporter. This chain is Putative sodium-coupled neutral amino acid transporter 11 (SLC38A11), found in Macaca fascicularis (Crab-eating macaque).